A 513-amino-acid polypeptide reads, in one-letter code: ATP synthase subunit alpha 1 (513 aa).

Gly169–Thr176 provides a ligand contact to ATP.

It belongs to the ATPase alpha/beta chains family. As to quaternary structure, F-type ATPases have 2 components, CF(1) - the catalytic core - and CF(0) - the membrane proton channel. CF(1) has five subunits: alpha(3), beta(3), gamma(1), delta(1), epsilon(1). CF(0) has three main subunits: a(1), b(2) and c(9-12). The alpha and beta chains form an alternating ring which encloses part of the gamma chain. CF(1) is attached to CF(0) by a central stalk formed by the gamma and epsilon chains, while a peripheral stalk is formed by the delta and b chains.

Its subcellular location is the cell inner membrane. The catalysed reaction is ATP + H2O + 4 H(+)(in) = ADP + phosphate + 5 H(+)(out). In terms of biological role, produces ATP from ADP in the presence of a proton gradient across the membrane. The alpha chain is a regulatory subunit. The polypeptide is ATP synthase subunit alpha 1 (Photobacterium profundum (strain SS9)).